Here is a 984-residue protein sequence, read N- to C-terminus: Glycine dehydrogenase (decarboxylating) (984 aa).

At Lys-702 the chain carries N6-(pyridoxal phosphate)lysine.

The protein belongs to the GcvP family. As to quaternary structure, the glycine cleavage system is composed of four proteins: P, T, L and H. The cofactor is pyridoxal 5'-phosphate.

It carries out the reaction N(6)-[(R)-lipoyl]-L-lysyl-[glycine-cleavage complex H protein] + glycine + H(+) = N(6)-[(R)-S(8)-aminomethyldihydrolipoyl]-L-lysyl-[glycine-cleavage complex H protein] + CO2. In terms of biological role, the glycine cleavage system catalyzes the degradation of glycine. The P protein binds the alpha-amino group of glycine through its pyridoxal phosphate cofactor; CO(2) is released and the remaining methylamine moiety is then transferred to the lipoamide cofactor of the H protein. The protein is Glycine dehydrogenase (decarboxylating) of Xanthomonas oryzae pv. oryzae (strain MAFF 311018).